A 512-amino-acid polypeptide reads, in one-letter code: Cytochrome P450 26B1 (512 aa).

Position 441 (Cys-441) interacts with heme.

The protein belongs to the cytochrome P450 family. It depends on heme as a cofactor.

It localises to the endoplasmic reticulum membrane. Its subcellular location is the microsome membrane. The catalysed reaction is all-trans-retinoate + reduced [NADPH--hemoprotein reductase] + O2 = all-trans-4-hydroxyretinoate + oxidized [NADPH--hemoprotein reductase] + H2O + H(+). The enzyme catalyses all-trans-retinoate + reduced [NADPH--hemoprotein reductase] + O2 = all-trans-18-hydroxyretinoate + oxidized [NADPH--hemoprotein reductase] + H2O + H(+). Functionally, a cytochrome P450 monooxygenase involved in the metabolism of retinoates (RAs), the active metabolites of vitamin A, and critical signaling molecules in animals. RAs exist as at least four different isomers: all-trans-RA (atRA), 9-cis-RA, 13-cis-RA, and 9,13-dicis-RA, where atRA is considered to be the biologically active isomer, although 9-cis-RA and 13-cis-RA also have activity. Catalyzes the hydroxylation of atRA primarily at C-4 and C-18, thereby contributing to the regulation of atRA homeostasis and signaling. Hydroxylation of atRA limits its biological activity and initiates a degradative process leading to its eventual elimination. Involved in the convertion of atRA to all-trans-4-oxo-RA. Can oxidize all-trans-13,14-dihydroretinoate (DRA) to metabolites which could include all-trans-4-oxo-DRA, all-trans-4-hydroxy-DRA, all-trans-5,8-epoxy-DRA, and all-trans-18-hydroxy-DRA. Shows preference for the following substrates: atRA &gt; 9-cis-RA &gt; 13-cis-RA. Plays a central role in germ cell development: acts by degrading RAs in the developing testis, preventing STRA8 expression, thereby leading to delay of meiosis. Required for the maintenance of the undifferentiated state of male germ cells during embryonic development in Sertoli cells, inducing arrest in G0 phase of the cell cycle and preventing meiotic entry. Plays a role in skeletal development, both at the level of patterning and in the ossification of bone and the establishment of some synovial joints. Essential for postnatal survival. Its function is as follows. Also has a significant activity in oxidation of tazarotenic acid and may therefore metabolize that xenobiotic in vivo. The polypeptide is Cytochrome P450 26B1 (CYP26B1) (Bos taurus (Bovine)).